The primary structure comprises 21 residues: Granule-bound starch synthase 1 (21 aa).

The protein belongs to the glycosyltransferase 1 family. Bacterial/plant glycogen synthase subfamily.

Its subcellular location is the plastid. It localises to the chloroplast. The protein localises to the amyloplast. It catalyses the reaction an NDP-alpha-D-glucose + [(1-&gt;4)-alpha-D-glucosyl](n) = [(1-&gt;4)-alpha-D-glucosyl](n+1) + a ribonucleoside 5'-diphosphate + H(+). The protein operates within glycan biosynthesis; starch biosynthesis. The protein is Granule-bound starch synthase 1 of Secale cereale (Rye).